Reading from the N-terminus, the 305-residue chain is Putative monooxygenase p33MONOX (305 aa).

Positions 37–56 (LEDPAPMTPPPSDMGSVPWK) are disordered. Threonine 44 is modified (phosphothreonine). A Flavin-containing monooxygenase motif motif is present at residues 67-77 (LAKVEEGEASL). Disordered regions lie at residues 158–236 (QSGE…KYDS) and 259–305 (QANR…PTGF). Low complexity predominate over residues 169–183 (PASAQSTPSTTPHSS). A Phosphothreonine modification is found at threonine 175. Phosphoserine is present on residues serine 182 and serine 183. Over residues 193-210 (TSGSSTALPGPNPSTMDS) the composition is skewed to polar residues.

It belongs to the P33MONOX family. In terms of assembly, interacts with NELFB, NOL12 and PRNP. Down-regulated in the occipital lobe of an early stage Alzheimer disease patients.

It localises to the cytoplasm. Its function is as follows. Potential NADPH-dependent oxidoreductase. May be involved in the regulation of neuronal survival, differentiation and axonal outgrowth. The chain is Putative monooxygenase p33MONOX (KIAA1191) from Homo sapiens (Human).